Consider the following 32-residue polypeptide: Protamine S4 (32 aa).

Positions 1–32 (GCKKRKARKRPKCKKARKRPKCKRRKVAKKKC) are disordered.

Testis.

The protein resides in the nucleus. It localises to the chromosome. Its function is as follows. Protamines substitute for histones in the chromatin of sperm during the haploid phase of spermatogenesis. They compact sperm DNA into a highly condensed, stable and inactive complex. In Scyliorhinus canicula (Small-spotted catshark), this protein is Protamine S4.